The chain runs to 317 residues: Fe-S cluster assembly protein DRE2 (317 aa).

The tract at residues 1-131 is N-terminal SAM-like domain; the sequence is MERMLFLSPP…KPNFGAQDTV (131 aa). A linker region spans residues 132-209; the sequence is PLKLGKKKKA…EEALMDEEDM (78 aa). [2Fe-2S] cluster contacts are provided by Cys-219, Cys-230, Cys-233, and Cys-235. The interval 219 to 235 is fe-S binding site A; the sequence is CRPKAGKRRRACKDCTC. Residues Cys-280, Cys-283, Cys-291, and Cys-294 each coordinate [4Fe-4S] cluster. 2 consecutive short sequence motifs (cx2C motif) follow at residues 280–283 and 291–294; these read CGNC and CDGC. Positions 280 to 294 are fe-S binding site B; the sequence is CGNCALGDAFRCDGC.

It belongs to the anamorsin family. As to quaternary structure, monomer. Interacts with TAH18. Interacts with MIA40. It depends on [2Fe-2S] cluster as a cofactor. [4Fe-4S] cluster serves as cofactor.

Its subcellular location is the cytoplasm. The protein resides in the mitochondrion intermembrane space. Component of the cytosolic iron-sulfur (Fe-S) protein assembly (CIA) machinery required for the maturation of extramitochondrial Fe-S proteins. Part of an electron transfer chain functioning in an early step of cytosolic Fe-S biogenesis, facilitating the de novo assembly of a [4Fe-4S] cluster on the scaffold complex CFD1-NBP35. Electrons are transferred to DRE2 from NADPH via the FAD- and FMN-containing protein TAH18. TAH18-DRE2 are also required for the assembly of the diferric tyrosyl radical cofactor of ribonucleotide reductase (RNR), probably by providing electrons for reduction during radical cofactor maturation in the catalytic small subunit RNR2. This chain is Fe-S cluster assembly protein DRE2, found in Uncinocarpus reesii (strain UAMH 1704).